The chain runs to 36 residues: Conotoxin Cal6.1h (36 aa).

Residues 1-7 (GLGRPSR) constitute a propeptide that is removed on maturation. Disulfide bonds link cysteine 9/cysteine 25, cysteine 16/cysteine 29, and cysteine 24/cysteine 34.

The protein belongs to the conotoxin O1 superfamily. In terms of tissue distribution, expressed by the venom duct.

It localises to the secreted. Functionally, probable neurotoxin with unknown target. Possibly targets ion channels. The protein is Conotoxin Cal6.1h of Californiconus californicus (California cone).